A 558-amino-acid chain; its full sequence is Phosphatidylserine lipase ABHD16A (558 aa).

The next 2 membrane-spanning stretches (helical) occupy residues 60–80 (ILALASVFWSISYYSSPFAFF) and 93–113 (VVPFSHYAGTLLLLLAGVACL). The Cytoplasmic segment spans residues 114–558 (RGIGRWTNPQ…AQNFQMPWHL (445 aa)). The 127-residue stretch at 281–407 (LVICCEGNAG…LVTRTVRQHL (127 aa)) folds into the AB hydrolase-1 domain. Residues Ser-355, Asp-430, and His-507 each act as charge relay system in the active site.

Belongs to the AB hydrolase superfamily. ABHD16 family.

The protein resides in the membrane. The enzyme catalyses 1-heptadecanoyl-2-(5Z,8Z,11Z,14Z-eicosatetraenoyl)-sn-glycero-3-phosphoserine + H2O = 1-heptadecanoyl-sn-glycero-3-phosphoserine + (5Z,8Z,11Z,14Z)-eicosatetraenoate + H(+). The catalysed reaction is 1-hexadecanoyl-2-(9Z-octadecenoyl)-sn-glycero-3-phospho-L-serine + H2O = 1-hexadecanoyl-sn-glycero-3-phospho-L-serine + (9Z)-octadecenoate + H(+). It carries out the reaction 1-octadecanoyl-2-(9Z,12Z-octadecadienoyl)-sn-glycero-3-phosphoserine + H2O = 1-octadecanoyl-sn-glycero-3-phosphoserine + (9Z,12Z)-octadecadienoate + H(+). It catalyses the reaction 1-heptadecanoyl-2-(5Z,8Z,11Z,14Z-eicosatetraenoyl)-sn-glycero-3-phosphocholine + H2O = 1-heptadecanoyl-sn-glycero-3-phosphocholine + (5Z,8Z,11Z,14Z)-eicosatetraenoate + H(+). The enzyme catalyses 1-hexadecanoyl-2-(9Z-octadecenoyl)-sn-glycero-3-phosphoglycerol + H2O = 1-hexadecanoyl-sn-glycero-3-phosphoglycerol + (9Z)-octadecenoate + H(+). The catalysed reaction is 1-hexadecanoyl-2-(9Z-octadecenoyl)-sn-glycero-3-phospho-(1D-myo-inositol) + H2O = 1-hexadecanoyl-sn-glycero-3-phospho-(1D-myo-inositol) + (9Z)-octadecenoate + H(+). It carries out the reaction 1-heptadecanoyl-2-(5Z,8Z,11Z,14Z-eicosatetraenoyl)-sn-glycero-3-phosphoethanolamine + H2O = 1-heptadecanoyl-sn-glycero-3-phosphoethanolamine + (5Z,8Z,11Z,14Z)-eicosatetraenoate + H(+). It catalyses the reaction 1-hexadecanoyl-2-(9Z-octadecenoyl)-sn-glycero-3-phospho-(1'-sn-glycerol) + H2O = 1-hexadecanoyl-sn-glycero-3-phospho-(1'-sn-glycerol) + (9Z)-octadecenoate + H(+). The enzyme catalyses Hydrolyzes glycerol monoesters of long-chain fatty acids.. The catalysed reaction is 1-tetradecanoylglycerol + H2O = tetradecanoate + glycerol + H(+). It carries out the reaction 2-hexadecanoylglycerol + H2O = glycerol + hexadecanoate + H(+). It catalyses the reaction 1-(9Z-octadecenoyl)-glycerol + H2O = glycerol + (9Z)-octadecenoate + H(+). The enzyme catalyses 2-(9Z-octadecenoyl)-glycerol + H2O = glycerol + (9Z)-octadecenoate + H(+). The catalysed reaction is 2-(9Z,12Z-octadecadienoyl)-glycerol + H2O = (9Z,12Z)-octadecadienoate + glycerol + H(+). It carries out the reaction 1-(5Z,8Z,11Z,14Z-eicosatetraenoyl)-glycerol + H2O = glycerol + (5Z,8Z,11Z,14Z)-eicosatetraenoate + H(+). It catalyses the reaction 2-(5Z,8Z,11Z,14Z-eicosatetraenoyl)-glycerol + H2O = glycerol + (5Z,8Z,11Z,14Z)-eicosatetraenoate + H(+). The enzyme catalyses prostaglandin D2-1-glycerol ester + H2O = prostaglandin D2 + glycerol + H(+). The catalysed reaction is 2-glyceryl-15-deoxy-Delta(12,14)-prostaglandin J2 + H2O = 15-deoxy-Delta(12,14)-prostaglandin J2 + glycerol + H(+). It carries out the reaction 1-(9Z,12Z-octadecadienoyl)-glycerol + H2O = (9Z,12Z)-octadecadienoate + glycerol + H(+). Phosphatidylserine (PS) lipase that mediates the hydrolysis of phosphatidylserine to generate lysophosphatidylserine (LPS). LPS constitutes a class of signaling lipids that regulates immunological and neurological processes. Has no activity towards diacylglycerol, triacylglycerol or lysophosphatidylserine lipase. Also has monoacylglycerol lipase activity, with preference for 1-(9Z,12Z-octadecadienoyl)-glycerol (1-LG) and 2-glyceryl-15-deoxy-Delta(12,14)-prostaglandin J2 (15d-PGJ(2)-G). This Macaca fascicularis (Crab-eating macaque) protein is Phosphatidylserine lipase ABHD16A.